The following is a 342-amino-acid chain: UDP-N-acetylglucosamine transporter YEA4 (342 aa).

At 1–6 (MWNSLK) the chain is on the cytoplasmic side. Residues 7 to 27 (AFALVFGGCCSNVITFETLMS) traverse the membrane as a helical segment. Residues 28–35 (NETGSINN) lie on the Lumenal side of the membrane. A helical transmembrane segment spans residues 36–56 (LITFCQFLFVTCQGLPEFLDV). The Cytoplasmic segment spans residues 57–61 (HQPFP). The chain crosses the membrane as a helical span at residues 62–82 (YFKPLKTPLHVYVITVVLFYI). Residues 83–96 (SSTTNNNVFKYNIS) lie on the Lumenal side of the membrane. The chain crosses the membrane as a helical span at residues 97–117 (IPIHIVFRCFGTVITMFTCWL). Over 118–123 (LNGRKY) the chain is Cytoplasmic. Residues 124 to 144 (TKIQILSTLFLTIGAIIASLF) traverse the membrane as a helical segment. Over 145–168 (KDADFRYQDLKLQAWKIGSDQSVD) the chain is Lumenal. A helical membrane pass occupies residues 169–189 (LTFIFGICILVLSSFTSSLLS). Topologically, residues 190–253 (AYNERTYQKY…GGKILVPREE (64 aa)) are cytoplasmic. A helical transmembrane segment spans residues 254-274 (TLLLFNVLTQYFCVKGVNILA). Topologically, residues 275–307 (SKTNALTLSITLLVRKFISLLLSVRLFDNNLSY) are lumenal. Residues 308–328 (TGYIGVYLVFFGAFIYSLGSI) form a helical membrane-spanning segment. Residues 329-342 (HPRQNDKGAIKKSK) lie on the Cytoplasmic side of the membrane.

The protein belongs to the nucleotide-sugar transporter family. SLC35B subfamily.

The protein resides in the endoplasmic reticulum. It is found in the endoplasmic reticulum membrane. In terms of biological role, sugar transporter that specifically mediates the transport of UDP-N-acetylglucosamine (UDP-GlcNAc) and is required for cell wall chitin synthesis. In Saccharomyces cerevisiae (strain ATCC 204508 / S288c) (Baker's yeast), this protein is UDP-N-acetylglucosamine transporter YEA4 (YEA4).